We begin with the raw amino-acid sequence, 280 residues long: 2,3,4,5-tetrahydropyridine-2,6-dicarboxylate N-succinyltransferase (280 aa).

The protein belongs to the transferase hexapeptide repeat family.

The protein resides in the cytoplasm. It carries out the reaction (S)-2,3,4,5-tetrahydrodipicolinate + succinyl-CoA + H2O = (S)-2-succinylamino-6-oxoheptanedioate + CoA. It functions in the pathway amino-acid biosynthesis; L-lysine biosynthesis via DAP pathway; LL-2,6-diaminopimelate from (S)-tetrahydrodipicolinate (succinylase route): step 1/3. This is 2,3,4,5-tetrahydropyridine-2,6-dicarboxylate N-succinyltransferase from Methylorubrum extorquens (strain PA1) (Methylobacterium extorquens).